Consider the following 21-residue polypeptide: Sarafotoxin-D (21 aa).

2 disulfides stabilise this stretch: C1-C15 and C3-C11.

This sequence belongs to the endothelin/sarafotoxin family. Expressed by the venom gland.

It localises to the secreted. Functionally, vasoconstrictor activity. These toxins cause cardiac arrest probably as a result of coronary vasospasm. May act by displaying agonistic activities towards endothelin-1 and -2 receptors (EDNRA and EDNRB). In Atractaspis engaddensis (Israeli burrowing asp), this protein is Sarafotoxin-D.